The primary structure comprises 251 residues: Uridylate kinase (251 aa).

Position 19–22 (19–22 (KLSG)) interacts with ATP. G61 contributes to the UMP binding site. ATP is bound by residues G62 and R66. UMP is bound by residues D81 and 142–149 (IGNPFFTT). Positions 169, 170, 175, and 178 each coordinate ATP.

Belongs to the UMP kinase family. In terms of assembly, homohexamer.

The protein resides in the cytoplasm. The catalysed reaction is UMP + ATP = UDP + ADP. It participates in pyrimidine metabolism; CTP biosynthesis via de novo pathway; UDP from UMP (UMPK route): step 1/1. With respect to regulation, inhibited by UTP. Catalyzes the reversible phosphorylation of UMP to UDP. In Hyphomonas neptunium (strain ATCC 15444), this protein is Uridylate kinase.